The primary structure comprises 113 residues: Endoribonuclease SymE (113 aa).

A SpoVT-AbrB domain is found at S29–A74.

This sequence belongs to the SymE family.

The protein localises to the cytoplasm. In terms of biological role, involved in the degradation and recycling of damaged RNA. It is itself a target for degradation by the ATP-dependent protease Lon. This Shigella flexneri serotype 5b (strain 8401) protein is Endoribonuclease SymE.